The sequence spans 420 residues: Histidine--tRNA ligase (420 aa).

Belongs to the class-II aminoacyl-tRNA synthetase family. As to quaternary structure, homodimer.

It is found in the cytoplasm. The enzyme catalyses tRNA(His) + L-histidine + ATP = L-histidyl-tRNA(His) + AMP + diphosphate + H(+). The chain is Histidine--tRNA ligase from Acholeplasma laidlawii (strain PG-8A).